The chain runs to 347 residues: MDKTKALDAALSQIERSFGKGSIMRLGQKEQVVEIETIPTGSLSLDIALGVGGLPKGRIVEIYGPESSGKTTLALHAIAEAQKNGGVCAFIDAEHALDPIYARKLGVDLENLFISQPDTGEQALEITETLVRSGAVDVLVVDSVAALTPRAEIDGEMGDALPGLQARLMSKALRKLTASIFRSNCMVIFINQIRMKIGVMFGSPETTTGGNALKFYASVRLDIRRVGSIKDRDMIVGNQTRVKVVKNKLAPPFKQVEFDIIYGEGISKLGELIDLGVKVGIVEKSGSWFSYNSQRLGQGRENAKQFLREHAEIATEIETALRQNAGLIAIELLENAGSENTESNEAI.

64 to 71 serves as a coordination point for ATP; that stretch reads GPESSGKT.

It belongs to the RecA family.

The protein localises to the cytoplasm. Can catalyze the hydrolysis of ATP in the presence of single-stranded DNA, the ATP-dependent uptake of single-stranded DNA by duplex DNA, and the ATP-dependent hybridization of homologous single-stranded DNAs. It interacts with LexA causing its activation and leading to its autocatalytic cleavage. The sequence is that of Protein RecA from Bartonella quintana (strain Toulouse) (Rochalimaea quintana).